The following is a 477-amino-acid chain: Glutamyl-tRNA reductase (477 aa).

Substrate-binding positions include 49 to 52 (TCNR), S109, 114 to 116 (EQQ), and Q120. C50 serves as the catalytic Nucleophile. 189–194 (GAGAMG) is an NADP(+) binding site.

The protein belongs to the glutamyl-tRNA reductase family. As to quaternary structure, homodimer.

The enzyme catalyses (S)-4-amino-5-oxopentanoate + tRNA(Glu) + NADP(+) = L-glutamyl-tRNA(Glu) + NADPH + H(+). It participates in porphyrin-containing compound metabolism; protoporphyrin-IX biosynthesis; 5-aminolevulinate from L-glutamyl-tRNA(Glu): step 1/2. Catalyzes the NADPH-dependent reduction of glutamyl-tRNA(Glu) to glutamate 1-semialdehyde (GSA). This chain is Glutamyl-tRNA reductase, found in Nocardia farcinica (strain IFM 10152).